A 180-amino-acid polypeptide reads, in one-letter code: ADP-ribosylation factor-like protein 1 (180 aa).

A lipid anchor (N-myristoyl glycine) is attached at glycine 2. GTP is bound by residues 23-30, 66-70, and 125-128; these read GLDGAGKT, DLGGQ, and NKQD.

This sequence belongs to the small GTPase superfamily. Arf family.

In terms of biological role, GTP-binding protein involved in protein trafficking; may modulate vesicle budding and uncoating within the Golgi apparatus. In Drosophila melanogaster (Fruit fly), this protein is ADP-ribosylation factor-like protein 1 (Arl1).